The sequence spans 351 residues: Protein TBATA (351 aa).

Disordered stretches follow at residues 16 to 40 (KAELKLEKKSGRKPRSPRDSGPQKE), 167 to 186 (KKEKEQKEEPLREQGAKYSA), 195 to 216 (STRAVGRRRSHQGQQSQSSSRH), and 292 to 351 (EVHE…RAES). The span at 167–181 (KKEKEQKEEPLREQG) shows a compositional bias: basic and acidic residues. Basic and acidic residues-rich tracts occupy residues 292-302 (EVHEPPQEKQE) and 340-351 (TEKKTSKPRAES).

Belongs to the TBATA family.

Its subcellular location is the cytoplasm. It is found in the cytosol. Functionally, may play a role in spermatid differentiation. Modulates thymic stromal cell proliferation and thymus function. In Homo sapiens (Human), this protein is Protein TBATA (TBATA).